The primary structure comprises 514 residues: Putative selenium-binding protein (514 aa).

It belongs to the selenium-binding protein family.

This Caenorhabditis briggsae protein is Putative selenium-binding protein.